The following is a 1163-amino-acid chain: Leptin receptor (1163 aa).

Residues 1–21 (MICQKFCVVLLHWEFICVITA) form the signal peptide. Over 22 to 837 (FNLSYPITPW…QDNTEKHQND (816 aa)) the chain is Extracellular. 7 N-linked (GlcNAc...) asparagine glycosylation sites follow: Asn-23, Asn-41, Asn-56, Asn-71, Asn-79, Asn-96, and Asn-114. Disulfide bonds link Cys-37–Cys-88 and Cys-87–Cys-97. 2 disulfides stabilise this stretch: Cys-129-Cys-140 and Cys-184-Cys-194. Residues Asn-185, Asn-204, Asn-274, Asn-345, and Asn-395 are each glycosylated (N-linked (GlcNAc...) asparagine). Positions 237–331 (PPLGLRMEIT…TPHVFTTQDV (95 aa)) constitute a Fibronectin type-III 1 domain. 2 disulfide bridges follow: Cys-350/Cys-410 and Cys-411/Cys-416. An N-linked (GlcNAc...) asparagine glycan is attached at Asn-431. Cystine bridges form between Cys-434–Cys-445, Cys-471–Cys-526, and Cys-486–Cys-496. Positions 465 to 482 (RRSSLYCFDIPSIHPISK) are leptin-binding. 3 consecutive Fibronectin type-III domains span residues 537-632 (PPSS…TVVM), 637-730 (PMRG…LTFS), and 738-831 (IVQS…QDNT). Residues 620–624 (WSNWS) carry the WSXWS motif motif. Residues Asn-622, Asn-657, Asn-668, Asn-686, Asn-695, Asn-726, and Asn-748 are each glycosylated (N-linked (GlcNAc...) asparagine). Residues 838-860 (AGLYVIVPVIISSSILLLGTLLI) traverse the membrane as a helical segment. At 861–1163 (LHQRMKKLFW…MENKMCDLTV (303 aa)) the chain is on the cytoplasmic side. The short motif at 869–877 (FWEDVPNPK) is the Box 1 motif element. Ser-880 carries the post-translational modification Phosphoserine. The tract at residues 891 to 896 (ETFEHL) is required for JAK2 activation. The segment at 896-904 (LFIKHTASV) is required for STAT3 phosphorylation. Residue Tyr-984 is modified to Phosphotyrosine; by JAK2. Position 1077 is a phosphotyrosine (Tyr-1077). Residue Tyr-1139 is modified to Phosphotyrosine; by JAK2.

It belongs to the type I cytokine receptor family. Type 2 subfamily. Present as a mixture of monomers and dimers. The phosphorylated receptor binds a number of SH2 domain-containing proteins such as JAK2, STAT3, PTPN11, and SOCS3. Interaction with SOCS3 inhibits JAK/STAT signaling and MAPK cascade. On ligand binding, phosphorylated on two conserved C-terminal tyrosine residues (isoform B only) by JAK2. Tyr-984 is required for complete binding and activation of PTPN11, ERK/FOS activation and, for interaction with SOCS3. Phosphorylation on Tyr-1139 is required for STAT3 binding/activation. In terms of processing, on ligand binding, phosphorylated on two conserved C-terminal tyrosine residues (isoform B only) by JAK2. Tyr-984 is required for complete binding and activation of PTPN11, ERK/FOS activation,for interaction with SOCS3 and SOCS3 mediated inhibition of leptin signaling. Phosphorylation on Tyr-1139 is required for STAT3 binding/activation. Phosphorylation of Tyr-1077 has a more accessory role. In terms of tissue distribution, widely expressed. High expression of isoform B in liver, adipose tissue, hypothalamus and choroid plexus.

The protein localises to the cell membrane. It localises to the basolateral cell membrane. Receptor for hormone LEP/leptin. On ligand binding, mediates LEP central and peripheral effects through the activation of different signaling pathways such as JAK2/STAT3 and MAPK cascade/FOS. In the hypothalamus, LEP acts as an appetite-regulating factor that induces a decrease in food intake and an increase in energy consumption by inducing anorexinogenic factors and suppressing orexigenic neuropeptides, also regulates bone mass and secretion of hypothalamo-pituitary-adrenal hormones. In the periphery, increases basal metabolism, influences reproductive function, regulates pancreatic beta-cell function and insulin secretion, is pro-angiogenic and affects innate and adaptive immunity. Control of energy homeostasis and melanocortin production (stimulation of POMC and full repression of AgRP transcription) is mediated by STAT3 signaling, whereas distinct signals regulate NPY and the control of fertility, growth and glucose homeostasis. Involved in the regulation of counter-regulatory response to hypoglycemia by inhibiting neurons of the parabrachial nucleus. Has a specific effect on T lymphocyte responses, differentially regulating the proliferation of naive and memory T-cells. Leptin increases Th1 and suppresses Th2 cytokine production. Its function is as follows. May transport LEP across the blood-brain barrier. Binds LEP and mediates LEP endocytosis. Does not induce phosphorylation of and activate STAT3. This chain is Leptin receptor (LEPR), found in Macaca mulatta (Rhesus macaque).